We begin with the raw amino-acid sequence, 360 residues long: Probable dual-specificity RNA methyltransferase RlmN (360 aa).

Glu91 serves as the catalytic Proton acceptor. The Radical SAM core domain occupies 97–335 (QHYGQSVCVT…CVVRQEHGTD (239 aa)). Cysteines 104 and 340 form a disulfide. Residues Cys111, Cys115, and Cys118 each coordinate [4Fe-4S] cluster. S-adenosyl-L-methionine-binding positions include 163 to 164 (GE), Ser195, 218 to 220 (SLH), and Asn296. The active-site S-methylcysteine intermediate is the Cys340.

It belongs to the radical SAM superfamily. RlmN family. [4Fe-4S] cluster serves as cofactor.

Its subcellular location is the cytoplasm. It catalyses the reaction adenosine(2503) in 23S rRNA + 2 reduced [2Fe-2S]-[ferredoxin] + 2 S-adenosyl-L-methionine = 2-methyladenosine(2503) in 23S rRNA + 5'-deoxyadenosine + L-methionine + 2 oxidized [2Fe-2S]-[ferredoxin] + S-adenosyl-L-homocysteine. The catalysed reaction is adenosine(37) in tRNA + 2 reduced [2Fe-2S]-[ferredoxin] + 2 S-adenosyl-L-methionine = 2-methyladenosine(37) in tRNA + 5'-deoxyadenosine + L-methionine + 2 oxidized [2Fe-2S]-[ferredoxin] + S-adenosyl-L-homocysteine. Functionally, specifically methylates position 2 of adenine 2503 in 23S rRNA and position 2 of adenine 37 in tRNAs. The sequence is that of Probable dual-specificity RNA methyltransferase RlmN from Streptococcus equi subsp. equi (strain 4047).